We begin with the raw amino-acid sequence, 79 residues long: uncharacterized protein (79 aa).

The disordered stretch occupies residues 51–79; that stretch reads PAQFPKVQRPPTLLGGKNTSTQTTLHPVI. Over residues 67-79 the composition is skewed to polar residues; sequence KNTSTQTTLHPVI.

This is an uncharacterized protein from Homo sapiens (Human).